The sequence spans 353 residues: DNA-directed RNA polymerase subunit alpha (353 aa).

Residues 1–234 (MVQEKVRVST…DLFIPFLHTE (234 aa)) form an alpha N-terminal domain (alpha-NTD) region. Positions 266–353 (KKIALKSIFI…LAQSIYSESG (88 aa)) are alpha C-terminal domain (alpha-CTD).

It belongs to the RNA polymerase alpha chain family. In plastids the minimal PEP RNA polymerase catalytic core is composed of four subunits: alpha, beta, beta', and beta''. When a (nuclear-encoded) sigma factor is associated with the core the holoenzyme is formed, which can initiate transcription.

It is found in the plastid. The protein localises to the chloroplast. It carries out the reaction RNA(n) + a ribonucleoside 5'-triphosphate = RNA(n+1) + diphosphate. Its function is as follows. DNA-dependent RNA polymerase catalyzes the transcription of DNA into RNA using the four ribonucleoside triphosphates as substrates. The protein is DNA-directed RNA polymerase subunit alpha of Panax ginseng (Korean ginseng).